The following is a 141-amino-acid chain: Large ribosomal subunit protein uL11 (141 aa).

This sequence belongs to the universal ribosomal protein uL11 family. In terms of assembly, part of the ribosomal stalk of the 50S ribosomal subunit. Interacts with L10 and the large rRNA to form the base of the stalk. L10 forms an elongated spine to which L12 dimers bind in a sequential fashion forming a multimeric L10(L12)X complex. In terms of processing, one or more lysine residues are methylated.

Forms part of the ribosomal stalk which helps the ribosome interact with GTP-bound translation factors. This is Large ribosomal subunit protein uL11 from Streptococcus pyogenes serotype M1.